The following is a 162-amino-acid chain: Epoxidase pydX (162 aa).

Residues 1-26 form the signal peptide; the sequence is MSLIALPLRLLRLLPAITSTWVLAFA. Helical transmembrane passes span 62 to 82 and 89 to 109; these read WILIVVYPINYALGVVNLFVG and TGAMSWYTIGLLFSLAHMGYM. N-linked (GlcNAc...) asparagine glycosylation is found at Asn127 and Asn139.

It belongs to the epoxidase xenD family.

It localises to the membrane. It functions in the pathway mycotoxin biosynthesis. Functionally, epoxidase; part of the gene cluster that mediates the biosynthesis of pyrrocidines, fungal natural products containing a macrocyclic para-cyclophane connected to a decahydrofluorene ring system that show potent antibiotic activities toward Gram-negative bacteria. Within the pathway, pydX functions synergistically with pydB, pydE and pydZ to form the cyclophane. The pathway begins with the PKS-NRPS pydA which, with the help of the trans-enoyl reductase pydC, synthesizes the polyketide-tyrosyl acyl thioester product which can be reductively off-loaded by the terminal reductase (R) domain in pydA. The alpha/beta hydrolase pydG is then required to catalyze the subsequent Knoevenagel condensation that affords the 3-pyrrolin-2-one ring, whereas the four proteins pydB, pydE, pydX and pydZ then function synergistically to form the cyclophane. PydB and the membrane-bound pydX and pydZ are lipid-binding proteins that can sequester and mold the pdyG product into the inverse S-shape. Binding of the medium chain reductase pydE to the complex would trigger the cascade oxidative cyclization. PydY is involved in the Diels-Alder cycloaddition that forms the decahydrofluorene core. Additional non-enzymatic hydroxylation yields pyrrocidine A2 which can be further reduced into pyrrocidine B by an endogenous reductase. The polypeptide is Epoxidase pydX (Acremonium sp).